The sequence spans 404 residues: Cysteine desulfurase IscS (404 aa).

Pyridoxal 5'-phosphate-binding positions include 75–76 (AT), Asn155, Gln183, and 203–205 (SAH). N6-(pyridoxal phosphate)lysine is present on Lys206. Residue Thr243 coordinates pyridoxal 5'-phosphate. Cys328 (cysteine persulfide intermediate) is an active-site residue. Cys328 contacts [2Fe-2S] cluster.

This sequence belongs to the class-V pyridoxal-phosphate-dependent aminotransferase family. NifS/IscS subfamily. Homodimer. Forms a heterotetramer with IscU, interacts with other sulfur acceptors. Requires pyridoxal 5'-phosphate as cofactor.

It localises to the cytoplasm. It carries out the reaction (sulfur carrier)-H + L-cysteine = (sulfur carrier)-SH + L-alanine. It functions in the pathway cofactor biosynthesis; iron-sulfur cluster biosynthesis. In terms of biological role, master enzyme that delivers sulfur to a number of partners involved in Fe-S cluster assembly, tRNA modification or cofactor biosynthesis. Catalyzes the removal of elemental sulfur atoms from cysteine to produce alanine. Functions as a sulfur delivery protein for Fe-S cluster synthesis onto IscU, an Fe-S scaffold assembly protein, as well as other S acceptor proteins. The polypeptide is Cysteine desulfurase IscS (Buchnera aphidicola subsp. Baizongia pistaciae (strain Bp)).